Consider the following 558-residue polypeptide: Polypeptide N-acetylgalactosaminyltransferase 16 (558 aa).

The Cytoplasmic portion of the chain corresponds to 1 to 6 (MRKIRA). Residues 7-26 (NAIAILTVAWILGTFYYLWQ) traverse the membrane as a helical; Signal-anchor for type II membrane protein segment. Residues 27–558 (DNRAHAASSG…AQQWQLLPHT (532 aa)) lie on the Lumenal side of the membrane. A disordered region spans residues 33-54 (ASSGGRGAQRAGRRSEQLREDR). Basic and acidic residues predominate over residues 45–54 (RRSEQLREDR). 5 disulfide bridges follow: cysteine 113–cysteine 340, cysteine 331–cysteine 409, cysteine 441–cysteine 460, cysteine 486–cysteine 506, and cysteine 530–cysteine 543. Residues 122–227 (LPATSVIITF…TEWLPPMLQR (106 aa)) form a catalytic subdomain A region. Aspartate 163 and arginine 188 together coordinate substrate. Aspartate 211 contributes to the Mn(2+) binding site. Serine 212 contributes to the substrate binding site. Residue histidine 213 coordinates Mn(2+). Positions 286 to 348 (PIRTPVIAGG…PCSRVGHVFR (63 aa)) are catalytic subdomain B. Position 317 (tryptophan 317) interacts with substrate. Histidine 345 lines the Mn(2+) pocket. Residues arginine 348, histidine 351, and tyrosine 353 each contribute to the substrate site. The Ricin B-type lectin domain occupies 428–555 (KEALPGIIKQ…DAQAQQWQLL (128 aa)).

Belongs to the glycosyltransferase 2 family. GalNAc-T subfamily. Mn(2+) serves as cofactor.

It localises to the golgi apparatus membrane. It carries out the reaction L-seryl-[protein] + UDP-N-acetyl-alpha-D-galactosamine = a 3-O-[N-acetyl-alpha-D-galactosaminyl]-L-seryl-[protein] + UDP + H(+). The catalysed reaction is L-threonyl-[protein] + UDP-N-acetyl-alpha-D-galactosamine = a 3-O-[N-acetyl-alpha-D-galactosaminyl]-L-threonyl-[protein] + UDP + H(+). The protein operates within protein modification; protein glycosylation. Functionally, catalyzes the initial reaction in O-linked oligosaccharide biosynthesis, the transfer of an N-acetyl-D-galactosamine residue to a serine or threonine residue on the protein receptor. The sequence is that of Polypeptide N-acetylgalactosaminyltransferase 16 (GALNT16) from Homo sapiens (Human).